The following is a 471-amino-acid chain: Tryptophanase (471 aa).

K256 bears the N6-(pyridoxal phosphate)lysine mark.

It belongs to the beta-eliminating lyase family. As to quaternary structure, homotetramer. The cofactor is pyridoxal 5'-phosphate.

The enzyme catalyses L-tryptophan + H2O = indole + pyruvate + NH4(+). It participates in amino-acid degradation; L-tryptophan degradation via pyruvate pathway; indole and pyruvate from L-tryptophan: step 1/1. The chain is Tryptophanase from Salinibacter ruber (strain DSM 13855 / M31).